Here is a 405-residue protein sequence, read N- to C-terminus: Cysteine desulfurase IscS (405 aa).

Residues 75 to 76, asparagine 155, glutamine 183, and 203 to 205 each bind pyridoxal 5'-phosphate; these read AT and SGH. N6-(pyridoxal phosphate)lysine is present on lysine 206. Threonine 243 contributes to the pyridoxal 5'-phosphate binding site. The Cysteine persulfide intermediate role is filled by cysteine 329. Cysteine 329 contributes to the [2Fe-2S] cluster binding site.

This sequence belongs to the class-V pyridoxal-phosphate-dependent aminotransferase family. NifS/IscS subfamily. Homodimer. Forms a heterotetramer with IscU, interacts with other sulfur acceptors. The cofactor is pyridoxal 5'-phosphate.

It localises to the cytoplasm. The enzyme catalyses (sulfur carrier)-H + L-cysteine = (sulfur carrier)-SH + L-alanine. The protein operates within cofactor biosynthesis; iron-sulfur cluster biosynthesis. Functionally, master enzyme that delivers sulfur to a number of partners involved in Fe-S cluster assembly, tRNA modification or cofactor biosynthesis. Catalyzes the removal of elemental sulfur atoms from cysteine to produce alanine. Functions as a sulfur delivery protein for Fe-S cluster synthesis onto IscU, an Fe-S scaffold assembly protein, as well as other S acceptor proteins. The chain is Cysteine desulfurase IscS from Pseudoalteromonas translucida (strain TAC 125).